Consider the following 366-residue polypeptide: Ribosomal RNA large subunit methyltransferase M (366 aa).

S-adenosyl-L-methionine contacts are provided by residues Ser188, 221–224, Asp240, Asp260, and Asp277; that span reads CPGG. Lys306 (proton acceptor) is an active-site residue.

It belongs to the class I-like SAM-binding methyltransferase superfamily. RNA methyltransferase RlmE family. RlmM subfamily. Monomer.

Its subcellular location is the cytoplasm. The catalysed reaction is cytidine(2498) in 23S rRNA + S-adenosyl-L-methionine = 2'-O-methylcytidine(2498) in 23S rRNA + S-adenosyl-L-homocysteine + H(+). Catalyzes the 2'-O-methylation at nucleotide C2498 in 23S rRNA. This Citrobacter koseri (strain ATCC BAA-895 / CDC 4225-83 / SGSC4696) protein is Ribosomal RNA large subunit methyltransferase M.